The chain runs to 315 residues: Porphobilinogen deaminase (315 aa).

Cys-238 is modified (S-(dipyrrolylmethanemethyl)cysteine).

Belongs to the HMBS family. Monomer. Dipyrromethane serves as cofactor.

The enzyme catalyses 4 porphobilinogen + H2O = hydroxymethylbilane + 4 NH4(+). It participates in porphyrin-containing compound metabolism; protoporphyrin-IX biosynthesis; coproporphyrinogen-III from 5-aminolevulinate: step 2/4. Its function is as follows. Tetrapolymerization of the monopyrrole PBG into the hydroxymethylbilane pre-uroporphyrinogen in several discrete steps. The sequence is that of Porphobilinogen deaminase from Albidiferax ferrireducens (strain ATCC BAA-621 / DSM 15236 / T118) (Rhodoferax ferrireducens).